The sequence spans 689 residues: Homoaconitase, mitochondrial (689 aa).

The transit peptide at 1 to 17 directs the protein to the mitochondrion; the sequence is MVVLRRSFHVYTRLQRG. Positions 336, 403, and 406 each coordinate [4Fe-4S] cluster.

It belongs to the aconitase/IPM isomerase family. It depends on [4Fe-4S] cluster as a cofactor.

The protein resides in the mitochondrion. The enzyme catalyses (2R,3S)-homoisocitrate = cis-homoaconitate + H2O. Its pathway is amino-acid biosynthesis; L-lysine biosynthesis via AAA pathway; L-alpha-aminoadipate from 2-oxoglutarate: step 3/5. Catalyzes the reversible hydration of cis-homoaconitate to (2R,3S)-homoisocitrate, a step in the alpha-aminoadipate pathway for lysine biosynthesis. This is Homoaconitase, mitochondrial (LYS4) from Candida glabrata (strain ATCC 2001 / BCRC 20586 / JCM 3761 / NBRC 0622 / NRRL Y-65 / CBS 138) (Yeast).